A 192-amino-acid chain; its full sequence is Nucleoside triphosphate pyrophosphatase (192 aa).

Residue aspartate 73 is the Proton acceptor of the active site.

Belongs to the Maf family. A divalent metal cation serves as cofactor.

The protein localises to the cytoplasm. The catalysed reaction is a ribonucleoside 5'-triphosphate + H2O = a ribonucleoside 5'-phosphate + diphosphate + H(+). It carries out the reaction a 2'-deoxyribonucleoside 5'-triphosphate + H2O = a 2'-deoxyribonucleoside 5'-phosphate + diphosphate + H(+). Its function is as follows. Nucleoside triphosphate pyrophosphatase. May have a dual role in cell division arrest and in preventing the incorporation of modified nucleotides into cellular nucleic acids. This chain is Nucleoside triphosphate pyrophosphatase, found in Ehrlichia chaffeensis (strain ATCC CRL-10679 / Arkansas).